A 408-amino-acid polypeptide reads, in one-letter code: Succinylornithine transaminase (408 aa).

Residue K252 is modified to N6-(pyridoxal phosphate)lysine.

Belongs to the class-III pyridoxal-phosphate-dependent aminotransferase family. AstC subfamily. It depends on pyridoxal 5'-phosphate as a cofactor.

The catalysed reaction is N(2)-succinyl-L-ornithine + 2-oxoglutarate = N-succinyl-L-glutamate 5-semialdehyde + L-glutamate. The protein operates within amino-acid degradation; L-arginine degradation via AST pathway; L-glutamate and succinate from L-arginine: step 3/5. In terms of biological role, catalyzes the transamination of N(2)-succinylornithine and alpha-ketoglutarate into N(2)-succinylglutamate semialdehyde and glutamate. Can also act as an acetylornithine aminotransferase. In Salmonella paratyphi A (strain ATCC 9150 / SARB42), this protein is Succinylornithine transaminase.